A 100-amino-acid chain; its full sequence is Small ribosomal subunit protein uS14c (100 aa).

The protein belongs to the universal ribosomal protein uS14 family. Part of the 30S ribosomal subunit.

It is found in the plastid. The protein resides in the chloroplast. Binds 16S rRNA, required for the assembly of 30S particles. In Physcomitrium patens (Spreading-leaved earth moss), this protein is Small ribosomal subunit protein uS14c.